Consider the following 387-residue polypeptide: Synaptotagmin-8 (387 aa).

The Extracellular portion of the chain corresponds to 1-34; sequence MGHPPVSPSAPAPAGTTAIPGLIPDLVAGTPWPR. Residues 35-55 traverse the membrane as a helical; Signal-anchor for type III membrane protein segment; that stretch reads WALIAGALAAGVLLVSCLLCA. Residues 56–387 lie on the Cytoplasmic side of the membrane; that stretch reads ACCCCRRHRK…LRLRLPLPHS (332 aa). Residues 70 to 99 are disordered; it reads KESVGLGSARGTTTTHLVQPDVDGLESSPG. C2 domains lie at 103–219 and 231–346; these read QWGC…EHWY and QVGE…QHWA.

It belongs to the synaptotagmin family. In terms of assembly, homodimer or homooligomer. Homodimerization and homooligomerization do not depend on Ca(2+). Interacts with SYNCRIP isoform 2 C-terminus. Binds inositol 1,3,4,5-tetrakisphosphate (IP4). Binds to AP2 in a Ca(2+)-independent manner. Interacts with STX1A, STX1B and STX2; the interaction is Ca(2+)-dependent.

The protein localises to the cell membrane. The protein resides in the cytoplasmic vesicle. Its subcellular location is the secretory vesicle. It is found in the acrosome. In terms of biological role, involved in the trafficking and exocytosis of secretory vesicles in non-neuronal tissues. Mediates Ca(2+)-regulation of exocytosis acrosomal reaction in sperm. May mediate Ca(2+)-regulation of exocytosis in insulin secreted cells. The sequence is that of Synaptotagmin-8 (SYT8) from Homo sapiens (Human).